The chain runs to 565 residues: MLNSSTNNTSSPIINSIETTDIEEKYRKYYVPNDLYWGIGIENESYFMLDKTIERTGEYIKKNRRRERYSVDYNTSYDQEKLTNYLNKLFGDRDLFNIPQYVNSHTLSKTDTQGEHRTLYVIGQKNNPKYSGKSLHELFLETNNLYQLDFNHKYVFDGDTIEFITQNFYKTTVNDCVNELIMYKNKFVNDMNILMKKNNLPLLSFPKINFGLVHFRTNPNNIGIFNNGTYHINLTMPTKLNSQGEIADPILFEKRHKNAIELIKWIEPLIIALYGSPDVFSVEDNQKYSKGSLRLTASRYVSIGTYDTNIMKKGKQLNDLKDSMYLYLYDKSWYNKIYQQTDYKQCDHIGYDINYAKHLNLGIEFRILDYFPEEVLGELIKFIVLILDHSFETKIDLQSVECKEWHDFVCDALINGNTVIVPKELGLIMNQFIGFPLIKHNMSIKKYMKKLSKFLHKKYANSLCSRNMSPNMQVPKIYNINKYMWENNFLQYIPINNKNHLKVLKLYHIYSDLKSDKITFDPENNYHSILVNSDLLQESELDLDTFYEKLLKISNSKIPINKYIL.

This is an uncharacterized protein from Acanthamoeba polyphaga mimivirus (APMV).